The primary structure comprises 292 residues: Ribosomal protein L11 methyltransferase (292 aa).

S-adenosyl-L-methionine contacts are provided by T143, G164, D186, and N228.

The protein belongs to the methyltransferase superfamily. PrmA family.

It localises to the cytoplasm. It carries out the reaction L-lysyl-[protein] + 3 S-adenosyl-L-methionine = N(6),N(6),N(6)-trimethyl-L-lysyl-[protein] + 3 S-adenosyl-L-homocysteine + 3 H(+). Its function is as follows. Methylates ribosomal protein L11. This Aeromonas hydrophila subsp. hydrophila (strain ATCC 7966 / DSM 30187 / BCRC 13018 / CCUG 14551 / JCM 1027 / KCTC 2358 / NCIMB 9240 / NCTC 8049) protein is Ribosomal protein L11 methyltransferase.